The primary structure comprises 419 residues: Zinc finger protein Pegasus (419 aa).

3 C2H2-type zinc fingers span residues 79-101 (LKCR…IRIH), 107-129 (HRCH…MRSH), and 135-158 (YKCE…RRRH). Disordered stretches follow at residues 203 to 255 (LQKP…DQDM) and 310 to 360 (SVNT…TPVQ). A compositionally biased stretch (basic and acidic residues) spans 208-228 (SEQHHLGDFTHDLPPHAHLHQ). Polar residues-rich tracts occupy residues 310-320 (SVNTAQASSPI) and 341-360 (ERTS…TPVQ). C2H2-type zinc fingers lie at residues 366–388 (HHCP…MGCH) and 394–418 (FQCN…RGQH).

It belongs to the Ikaros C2H2-type zinc-finger protein family. As to quaternary structure, probably self-associates.

Its subcellular location is the nucleus. Functionally, transcriptional repressor that binds the core 5'GNNTGTNG-3' DNA consensus sequence. The sequence is that of Zinc finger protein Pegasus (ikzf5) from Danio rerio (Zebrafish).